Consider the following 123-residue polypeptide: MATINQLVRQPRKRLVEKSDVPALQNCPQRRGVCTRVYTTTPKKPNSALRKVCRVRLTNGYEVTSYIGGEGHNLQEHSVVLIRGGRVKDLPGVRYHTVRGSLDTSGVKDRKQGRSKYGAKRPK.

Asp89 is subject to 3-methylthioaspartic acid. The disordered stretch occupies residues 101–123 (SLDTSGVKDRKQGRSKYGAKRPK). The span at 113–123 (GRSKYGAKRPK) shows a compositional bias: basic residues.

Belongs to the universal ribosomal protein uS12 family. As to quaternary structure, part of the 30S ribosomal subunit. Contacts proteins S8 and S17. May interact with IF1 in the 30S initiation complex.

Its function is as follows. With S4 and S5 plays an important role in translational accuracy. Functionally, interacts with and stabilizes bases of the 16S rRNA that are involved in tRNA selection in the A site and with the mRNA backbone. Located at the interface of the 30S and 50S subunits, it traverses the body of the 30S subunit contacting proteins on the other side and probably holding the rRNA structure together. The combined cluster of proteins S8, S12 and S17 appears to hold together the shoulder and platform of the 30S subunit. The protein is Small ribosomal subunit protein uS12 of Azotobacter vinelandii (strain DJ / ATCC BAA-1303).